We begin with the raw amino-acid sequence, 104 residues long: Iron-sulfur cluster assembly protein CyaY (104 aa).

The protein belongs to the frataxin family.

Its function is as follows. Involved in iron-sulfur (Fe-S) cluster assembly. May act as a regulator of Fe-S biogenesis. The polypeptide is Iron-sulfur cluster assembly protein CyaY (Tolumonas auensis (strain DSM 9187 / NBRC 110442 / TA 4)).